The chain runs to 209 residues: High frequency lysogenization protein HflD homolog (209 aa).

A coiled-coil region spans residues 95–132 (LERKLAASKGAMNTLGNRIADLSRQLEHFELESDTLMS).

Belongs to the HflD family.

The protein resides in the cytoplasm. Its subcellular location is the cell inner membrane. The protein is High frequency lysogenization protein HflD homolog of Cronobacter sakazakii (strain ATCC BAA-894) (Enterobacter sakazakii).